A 312-amino-acid chain; its full sequence is Malate dehydrogenase (312 aa).

Residues 7 to 13 (GAAGGIG) and Asp-34 each bind NAD(+). Arg-81 and Arg-87 together coordinate substrate. NAD(+)-binding positions include Asn-94 and 117 to 119 (ITN). Residues Asn-119 and Arg-153 each coordinate substrate. His-177 (proton acceptor) is an active-site residue. Met-227 is an NAD(+) binding site.

This sequence belongs to the LDH/MDH superfamily. MDH type 1 family. In terms of assembly, homodimer.

It carries out the reaction (S)-malate + NAD(+) = oxaloacetate + NADH + H(+). Catalyzes the reversible oxidation of malate to oxaloacetate. This chain is Malate dehydrogenase, found in Citrobacter koseri (strain ATCC BAA-895 / CDC 4225-83 / SGSC4696).